The chain runs to 332 residues: Ketol-acid reductoisomerase (NADP(+)) 1 (332 aa).

Positions 2 to 182 (AELFYDADAD…GGTRAGVIKT (181 aa)) constitute a KARI N-terminal Rossmann domain. Residues 25-28 (YGSQ), S51, S53, and 83-86 (DPIQ) each bind NADP(+). The active site involves H108. G134 contributes to the NADP(+) binding site. The KARI C-terminal knotted domain maps to 183 to 328 (TFTEETETDL…KELRKLMSWV (146 aa)). Mg(2+) is bound by residues D191, E195, E227, and E231. Position 252 (S252) interacts with substrate.

It belongs to the ketol-acid reductoisomerase family. It depends on Mg(2+) as a cofactor.

The enzyme catalyses (2R)-2,3-dihydroxy-3-methylbutanoate + NADP(+) = (2S)-2-acetolactate + NADPH + H(+). It carries out the reaction (2R,3R)-2,3-dihydroxy-3-methylpentanoate + NADP(+) = (S)-2-ethyl-2-hydroxy-3-oxobutanoate + NADPH + H(+). Its pathway is amino-acid biosynthesis; L-isoleucine biosynthesis; L-isoleucine from 2-oxobutanoate: step 2/4. The protein operates within amino-acid biosynthesis; L-valine biosynthesis; L-valine from pyruvate: step 2/4. Its function is as follows. Involved in the biosynthesis of branched-chain amino acids (BCAA). Catalyzes an alkyl-migration followed by a ketol-acid reduction of (S)-2-acetolactate (S2AL) to yield (R)-2,3-dihydroxy-isovalerate. In the isomerase reaction, S2AL is rearranged via a Mg-dependent methyl migration to produce 3-hydroxy-3-methyl-2-ketobutyrate (HMKB). In the reductase reaction, this 2-ketoacid undergoes a metal-dependent reduction by NADPH to yield (R)-2,3-dihydroxy-isovalerate. The polypeptide is Ketol-acid reductoisomerase (NADP(+)) 1 (Streptomyces coelicolor (strain ATCC BAA-471 / A3(2) / M145)).